The primary structure comprises 388 residues: Oxytocin receptor (388 aa).

The segment at 1 to 32 (MEGTPAANWSVELDLGSGVPPGEEGNRTAGPP) is disordered. The Extracellular portion of the chain corresponds to 1–38 (MEGTPAANWSVELDLGSGVPPGEEGNRTAGPPQRNEAL). Residues asparagine 8 and asparagine 26 are each glycosylated (N-linked (GlcNAc...) asparagine). A helical transmembrane segment spans residues 39–63 (ARVEVAVLCLILFLALSGNACVLLA). Over 64 to 74 (LRTTRHKHSRL) the chain is Cytoplasmic. The chain crosses the membrane as a helical span at residues 75–97 (FFFMKHLSIADLVVAVFQVLPQL). The Extracellular portion of the chain corresponds to 98–113 (LWDITFRFYGPDLLCR). Cysteine 112 and cysteine 187 form a disulfide bridge. A helical membrane pass occupies residues 114–135 (LVKYLQVVGMFASTYLLLLMSL). Residues 136–154 (DRCLAICQPLRSLRRRTDR) lie on the Cytoplasmic side of the membrane. A helical transmembrane segment spans residues 155-175 (LAVLGTWLGCLVASAPQVHIF). Topologically, residues 176–202 (SLREVADGVFDCWAVFIQPWGPKAYVT) are extracellular. A helical transmembrane segment spans residues 203–225 (WITLAVYIVPVIVLAACYGLISF). Topologically, residues 226–274 (KIWQNLRLKTAAAAAAAEGNDAAGGAGRAALARVSSVKLISKAKIRTVK) are cytoplasmic. Residues 275-293 (MTFIIVLAFIVCWTPFFFV) form a helical membrane-spanning segment. Residues 294–308 (QMWSVWDVNAPKEAS) are Extracellular-facing. Residues 309 to 331 (AFIIAMLLASLNSCCNPWIYMLF) traverse the membrane as a helical segment. The Cytoplasmic portion of the chain corresponds to 332 to 388 (TGHLFHELVQRFFCCSARYLKGSRPGETSVSKKSNSSTFVLSRRSSSQRSCSQPSSA). The disordered stretch occupies residues 354–388 (SRPGETSVSKKSNSSTFVLSRRSSSQRSCSQPSSA). Serine 365 and serine 367 each carry phosphoserine. A compositionally biased stretch (low complexity) spans 365-388 (SNSSTFVLSRRSSSQRSCSQPSSA).

This sequence belongs to the G-protein coupled receptor 1 family. Vasopressin/oxytocin receptor subfamily.

The protein resides in the cell membrane. Receptor for oxytocin. The activity of this receptor is mediated by G proteins which activate a phosphatidylinositol-calcium second messenger system. The chain is Oxytocin receptor (Oxtr) from Rattus norvegicus (Rat).